The following is a 779-amino-acid chain: Putative helicase V13 (779 aa).

Positions 477-642 constitute an SF3 helicase domain; that stretch reads DNPKPFITSL…FVKEEELNEK (166 aa). 504–511 is an ATP binding site; the sequence is GKSNAGKS.

The polypeptide is Putative helicase V13 (Acanthamoeba polyphaga (Amoeba)).